The chain runs to 289 residues: Diacylglycerol pyrophosphate phosphatase 1 (289 aa).

Topologically, residues 1–21 are vacuolar; that stretch reads MNRVSFIKTPFNIGAKWRLED. The chain crosses the membrane as a helical span at residues 22–42; that stretch reads VFLLIIMILLNYPVYYQQPFE. Residues 43 to 65 lie on the Cytoplasmic side of the membrane; the sequence is RQFYINDLTISHPYATTERVNNN. A helical membrane pass occupies residues 66–86; the sequence is MLFVYSFVVPSLTILIIGSIL. At 87 to 92 the chain is on the vacuolar side; the sequence is ADRRHL. A helical transmembrane segment spans residues 93 to 113; that stretch reads IFILYTSLLGLSLAWFSTSFF. The Cytoplasmic segment spans residues 114–172; the sequence is TNFIKNWIGRLRPDFLDRCQPVEGLPLDTLFTAKDVCTTKNHERLLDGFRTTPSGHSSE. Residues 118–126 form a phosphatase sequence motif I region; the sequence is KNWIGRLRP. A phosphatase sequence motif II region spans residues 166–169; the sequence is PSGH. A run of 2 helical transmembrane segments spans residues 173 to 193 and 194 to 214; these read SFAG…TESP and LMPL…ALIA. The Cytoplasmic segment spans residues 215–222; sequence LSRTQDYR. Positions 216-227 are phosphatase sequence motif III; the sequence is SRTQDYRHHFVD. The helical transmembrane segment at 223 to 243 threads the bilayer; it reads HHFVDVILGSMLGYIMAHFFY. The Vacuolar portion of the chain corresponds to 244-289; the sequence is RRIFPPIDDPLPFKPLMDDSDVTLEEAVTHQRIPDEELHPLSDEGM. Serine 285 bears the Phosphoserine mark.

It belongs to the PA-phosphatase related phosphoesterase family.

It is found in the vacuole membrane. The enzyme catalyses a 1,2-diacyl-sn-glycerol 3-diphosphate + H2O = a 1,2-diacyl-sn-glycero-3-phosphate + phosphate + H(+). It carries out the reaction a 1,2-diacyl-sn-glycero-3-phosphate + H2O = a 1,2-diacyl-sn-glycerol + phosphate. It catalyses the reaction a 1-acyl-sn-glycero-3-phosphate + H2O = a 1-acyl-sn-glycerol + phosphate. With respect to regulation, inhibited by sodium fluoride (NaF) and pyrophosphate. Strongly inhibited by manganese ion and, to a lower extent, by magnesium and calcium ions. Also inhibited by Cu(2+) ion. In an indirect manner, it is also inhibited by the zinc ion which is able to form a complex with DGPP and prevent the enzyme from removing the phosphate from the substrate. Not inhibited by N-ethylmaleimide. In terms of biological role, catalyzes the dephosphorylation of diacylglycerol diphosphate (DGPP) to phosphatidate (PA) and the subsequent dephosphorylation of PA to diacylglycerol (DAG). Together with LPP1, regulates intracellular DGPP and PA levels, which are phospholipid molecules believed to play a signaling role in stress response. Can also use lysophosphatidic acid (LPA) and phosphatidylglycerophosphate as substrates. Substrate preference is DGPP &gt; LPA &gt; PA. Activity is independent of a divalent cation ion and insensitive to inhibition by N-ethylmaleimide. This Saccharomyces cerevisiae (strain ATCC 204508 / S288c) (Baker's yeast) protein is Diacylglycerol pyrophosphate phosphatase 1 (DPP1).